The sequence spans 498 residues: Cytochrome P450 monooxygenase ltmP (498 aa).

The N-terminal stretch at 1-21 is a signal peptide; sequence MLMLHAVPVGICLLLWYVVYG. An N-linked (GlcNAc...) asparagine glycan is attached at N420. C435 provides a ligand contact to heme.

This sequence belongs to the cytochrome P450 family. It depends on heme as a cofactor.

Its pathway is secondary metabolite biosynthesis. Its function is as follows. Cytochrome P450 monooxygenase; part of the gene clusters that mediates the biosynthesis of lolitrems, indole-diterpene mycotoxins that are potent tremorgens in mammals, and are synthesized by clavicipitaceous fungal endophytes in association with their grass hosts. The geranylgeranyl diphosphate (GGPP) synthase ltmG is proposed to catalyze the first step in lolitrem biosynthesis. LtmG catalyzes a series of iterative condensations of isopentenyl diphosphate (IPP) with dimethylallyl diphosphate (DMAPP), geranyl diphosphate (GPP), and farnesyl diphosphate (FPP), to form GGPP. GGPP then condenses with indole-3-glycerol phosphate to form 3-geranylgeranylindole, an acyclic intermediate, to be incorporated into paxilline. Either ltmG or ltmC could be responsible for this step, as both are putative prenyl transferases. The FAD-dependent monooxygenase ltmM then catalyzes the epoxidation of the two terminal alkenes of the geranylgeranyl moiety, which is subsequently cyclized by ltmB, to paspaline. The cytochrome P450 monooxygenases ltmQ and ltmP can sequentially oxidize paspaline to terpendole E and terpendole F. Alternatively, ltmP converts paspaline to an intermediate which is oxidized by ltmQ to terpendole F. LtmF, ltmK, ltmE and ltmJ appear to be unique to the epichloe endophytes. The prenyltransferase ltmF is involved in the 27-hydroxyl-O-prenylation. The cytochrome P450 monooxygenase ltmK is required for the oxidative acetal ring formation. The multi-functional prenyltransferase ltmE is required for C20- and C21-prenylations of the indole ring of paspalanes and acts together with the cytochrome P450 monooxygenase ltmJ to yield lolitremanes by multiple oxidations and ring closures. The stereoisomer pairs of lolitriol and lolitrem N or lolitrem B and lolitrem F may be attributed to variations in the way in which ring closure can occur under the action of ltmJ. While the major product of this pathway is lolitrem B, the prenyl transferases and cytochrome P450 monooxygenases identified in this pathway have a remarkable versatility in their regio- and stereo-specificities to generate a diverse range of metabolites that are products of a metabolic grid rather than a linear pathway. This Epichloe festucae var. lolii (Neotyphodium lolii) protein is Cytochrome P450 monooxygenase ltmP.